We begin with the raw amino-acid sequence, 329 residues long: U5 small nuclear ribonucleoprotein TSSC4 (329 aa).

Disordered regions lie at residues 1 to 88 (MAEA…MSST) and 104 to 156 (ARRA…PDYV). Residues 22 to 41 (DTLPSDTVSLSDSDSDLSLP) show a composition bias toward low complexity. S60, S67, S86, S132, S143, and S146 each carry phosphoserine. The tract at residues 77-104 (VQPFHLRGMSSTFSQRSRDIFDCLEGAA) is hom2; mediates interaction with the U5 snRNP complexes and required for spliceosomal tri-snRNP complex assembly. The segment at 149–316 (VPPVPDYVAH…SRKRSRDHFR (168 aa)) is interaction with SNRNP200. Positions 150–186 (PPVPDYVAHPERWTKYSLEDVTEVSEQSNQATALAFL) are hom3; mediates interaction with the U5 snRNP complexes. The segment at 201 to 250 (FNQDPSSCGEGRVIFTKPVRGVEARHERKRVLGKVGEPGRGGLGNPATDR) is hom4; necessary for interaction with the PRPF19 complex and required for spliceosomal tri-snRNP complex assembly. The residue at position 217 (K217) is an N6-acetyllysine. The disordered stretch occupies residues 221–329 (GVEARHERKR…SSPEDPGAEV (109 aa)). Position 265 is a phosphoserine (S265). Residues 306-317 (GSRKRSRDHFRN) are compositionally biased toward basic residues. S321 is subject to Phosphoserine.

The protein belongs to the TSSC4 family. As to quaternary structure, interacts in a RNA-independent manner with distinct U5 snRNP-containing complexes, the mono-U5 snRNP and the post-splicing U5 snRNP-PRPF19 complex. Interacts with SNRNP200; the interaction is direct, excludes recruitment of C9ORF78 and WBP4 to SNRNP200 and negatively regulates its RNA helicase activity. Interacts with PRPF8; the interaction is direct. In terms of tissue distribution, expressed in fetal brain, lung, liver and kidney. Widely expressed in adult tissues.

The protein localises to the nucleus. It is found in the cytoplasm. In terms of biological role, protein associated with the U5 snRNP, during its maturation and its post-splicing recycling and which is required for spliceosomal tri-snRNP complex assembly in the nucleus. Has a molecular sequestering activity and transiently hinders SNRNP200 binding sites for constitutive splicing factors that intervene later during the assembly of the spliceosome and splicing. Together with its molecular sequestering activity, may also function as a molecular adapter and placeholder, coordinating the assembly of the U5 snRNP and its association with the U4/U6 di-snRNP. This chain is U5 small nuclear ribonucleoprotein TSSC4, found in Homo sapiens (Human).